A 530-amino-acid polypeptide reads, in one-letter code: Phosphoenolpyruvate carboxykinase (ATP) (530 aa).

3 residues coordinate substrate: Arg-57, Tyr-193, and Lys-199. Residues Lys-199, His-218, and 234–242 contribute to the ATP site; that span reads GLSGTGKTT. Residues Lys-199 and His-218 each contribute to the Mn(2+) site. Residue Asp-255 participates in Mn(2+) binding. The ATP site is built by Glu-283, Arg-320, and Thr-445. Arg-320 contributes to the substrate binding site.

The protein belongs to the phosphoenolpyruvate carboxykinase (ATP) family. Mn(2+) serves as cofactor.

Its subcellular location is the cytoplasm. The catalysed reaction is oxaloacetate + ATP = phosphoenolpyruvate + ADP + CO2. The protein operates within carbohydrate biosynthesis; gluconeogenesis. Its function is as follows. Involved in the gluconeogenesis. Catalyzes the conversion of oxaloacetate (OAA) to phosphoenolpyruvate (PEP) through direct phosphoryl transfer between the nucleoside triphosphate and OAA. The chain is Phosphoenolpyruvate carboxykinase (ATP) from Leptospira interrogans serogroup Icterohaemorrhagiae serovar copenhageni (strain Fiocruz L1-130).